The sequence spans 345 residues: Anthranilate phosphoribosyltransferase (345 aa).

Residues Gly84, 87-88, Thr92, 94-97, 112-120, and Ser124 each bind 5-phospho-alpha-D-ribose 1-diphosphate; these read GD, NIST, and KHGGRGVSS. An anthranilate-binding site is contributed by Gly84. Ser96 serves as a coordination point for Mg(2+). Arg170 lines the anthranilate pocket. The Mg(2+) site is built by Asp229 and Glu230.

The protein belongs to the anthranilate phosphoribosyltransferase family. Homodimer. Mg(2+) serves as cofactor.

It catalyses the reaction N-(5-phospho-beta-D-ribosyl)anthranilate + diphosphate = 5-phospho-alpha-D-ribose 1-diphosphate + anthranilate. It functions in the pathway amino-acid biosynthesis; L-tryptophan biosynthesis; L-tryptophan from chorismate: step 2/5. Functionally, catalyzes the transfer of the phosphoribosyl group of 5-phosphorylribose-1-pyrophosphate (PRPP) to anthranilate to yield N-(5'-phosphoribosyl)-anthranilate (PRA). The sequence is that of Anthranilate phosphoribosyltransferase from Paracidovorax citrulli (strain AAC00-1) (Acidovorax citrulli).